The primary structure comprises 299 residues: Protoheme IX farnesyltransferase (299 aa).

The next 9 membrane-spanning stretches (helical) occupy residues Val-25–Val-45, Trp-47–Val-67, Ala-95–Phe-115, Leu-119–Leu-139, Ile-147–Gly-167, Pro-173–Ile-193, Val-218–His-238, Leu-243–Tyr-263, and Phe-277–Leu-297.

The protein belongs to the UbiA prenyltransferase family. Protoheme IX farnesyltransferase subfamily.

The protein resides in the cell inner membrane. The enzyme catalyses heme b + (2E,6E)-farnesyl diphosphate + H2O = Fe(II)-heme o + diphosphate. Its pathway is porphyrin-containing compound metabolism; heme O biosynthesis; heme O from protoheme: step 1/1. In terms of biological role, converts heme B (protoheme IX) to heme O by substitution of the vinyl group on carbon 2 of heme B porphyrin ring with a hydroxyethyl farnesyl side group. The chain is Protoheme IX farnesyltransferase from Stutzerimonas stutzeri (strain A1501) (Pseudomonas stutzeri).